The primary structure comprises 406 residues: MTQTLDTREDPLNLGGGGGGGCGCGWAHSASLSSWSSCHRRRPGAPAYNRPHRYSPKTEYGPPRKQPKQQHGPGFWFQPPVCSNWGCWGGPWRPPPPGFWKFPCPVQVFRVYGLHPLCFCCCSCWSGSWNPGWVKPPGRKKRWGRRGRGLRHHPRHSYPRSPPADVSTLPRPVKLYEWREPGMRAPPNTTQFIMNQIYEDMRQQEKVERQQEALRAQKATVSGEASPARSSGNDAPPGGSKETWGLQETLYGFVQNPSLAFSPNPEENQSLAPLLVEEEEEKKNDDEEEYDQEVCDAKEASEEEEEVEDEEEEVEDEEEEEVEEAEYVEEGEEELEEEELEEEEEVLEENEQRGEEFHLPLEMPLSIFVEAEEKRENFISCTFLNPEQIIPKVPQESLFMAQDFNC.

4 disordered regions span residues 43–72 (PGAP…QQHG), 138–167 (GRKK…ADVS), 203–244 (QQEK…KETW), and 278–358 (EEEE…EEFH). A compositionally biased stretch (basic residues) spans 138–158 (GRKKRWGRRGRGLRHHPRHSY). 2 coiled-coil regions span residues 199-225 (EDMR…SGEA) and 274-359 (LLVE…EFHL). Basic and acidic residues predominate over residues 203 to 212 (QQEKVERQQE). Acidic residues-rich tracts occupy residues 278–294 (EEEE…DQEV) and 301–349 (SEEE…VLEE).

Its subcellular location is the nucleus. Functionally, regulator of histone epigenetic modifications and chromatin compaction into the sperm head, required for histone-to-protamine (HTP) transition. HTP is a key event in which somatic histones are first replaced by testis-specific histone variants, then transition proteins (TNPs) are incorporated into the spermatid nucleus, and finally protamines (PRMs) replace the TNPs to promote chromatin condensation. The chain is Coiled-coil domain-containing glutamate-rich protein 1 (CCER1) from Homo sapiens (Human).